The chain runs to 364 residues: F-box/kelch-repeat protein At3g23880 (364 aa).

The 47-residue stretch at Met8–His54 folds into the F-box domain. Kelch repeat units follow at residues Asp169–Gly215 and Ile216–Asp265.

The protein is F-box/kelch-repeat protein At3g23880 of Arabidopsis thaliana (Mouse-ear cress).